The following is a 178-amino-acid chain: MAESTTLARPYAKAAFELARDAGQLSEWSALLALTAAVAGDSNMHKVLNHPALTSAQKGQTFLDVCEGKLNEAGANFVRVLAENNRLVLLPEIAALFEQLKAQQEATIEVTIESAFEMNDEQENKLAQALQKKLSRNVNLRSQLNKELIGGIVVRAGDLVIDASVRGRLAKLAEAVNS.

The protein belongs to the ATPase delta chain family. As to quaternary structure, F-type ATPases have 2 components, F(1) - the catalytic core - and F(0) - the membrane proton channel. F(1) has five subunits: alpha(3), beta(3), gamma(1), delta(1), epsilon(1). F(0) has three main subunits: a(1), b(2) and c(10-14). The alpha and beta chains form an alternating ring which encloses part of the gamma chain. F(1) is attached to F(0) by a central stalk formed by the gamma and epsilon chains, while a peripheral stalk is formed by the delta and b chains.

The protein localises to the cell inner membrane. In terms of biological role, f(1)F(0) ATP synthase produces ATP from ADP in the presence of a proton or sodium gradient. F-type ATPases consist of two structural domains, F(1) containing the extramembraneous catalytic core and F(0) containing the membrane proton channel, linked together by a central stalk and a peripheral stalk. During catalysis, ATP synthesis in the catalytic domain of F(1) is coupled via a rotary mechanism of the central stalk subunits to proton translocation. Functionally, this protein is part of the stalk that links CF(0) to CF(1). It either transmits conformational changes from CF(0) to CF(1) or is implicated in proton conduction. The sequence is that of ATP synthase subunit delta from Hahella chejuensis (strain KCTC 2396).